A 491-amino-acid polypeptide reads, in one-letter code: Probable aspartyl aminopeptidase (491 aa).

Histidine 90 lines the Zn(2+) pocket. Histidine 168 is a binding site for substrate. Aspartate 278 is a binding site for Zn(2+). Glutamate 315 serves as a coordination point for substrate. Zn(2+) is bound by residues glutamate 316 and aspartate 361. Substrate contacts are provided by aspartate 361, histidine 364, lysine 389, and tyrosine 396. Histidine 455 is a Zn(2+) binding site.

It belongs to the peptidase M18 family. Tetrahedron-shaped homododecamer built from six homodimers. The cofactor is Zn(2+).

The protein resides in the cytoplasm. The enzyme catalyses Release of an N-terminal aspartate or glutamate from a peptide, with a preference for aspartate.. Functionally, likely to play an important role in intracellular protein and peptide metabolism. The protein is Probable aspartyl aminopeptidase of Ricinus communis (Castor bean).